Consider the following 382-residue polypeptide: Mannitol-1-phosphate 5-dehydrogenase (382 aa).

3–14 (ALHFGAGNIGRG) lines the NAD(+) pocket.

It belongs to the mannitol dehydrogenase family.

The enzyme catalyses D-mannitol 1-phosphate + NAD(+) = beta-D-fructose 6-phosphate + NADH + H(+). The polypeptide is Mannitol-1-phosphate 5-dehydrogenase (Erwinia tasmaniensis (strain DSM 17950 / CFBP 7177 / CIP 109463 / NCPPB 4357 / Et1/99)).